The following is a 350-amino-acid chain: Pleckstrin (350 aa).

Positions 4–101 constitute a PH 1 domain; sequence KRIREGYLVK…WVRDIKKAIK (98 aa). Lys-64 is modified (N6-acetyllysine). 2 positions are modified to phosphoserine; by PKC: Ser-113 and Ser-117. The DEP domain maps to 136–221; it reads TEKGIKELNL…NPDAFYYFPD (86 aa). The 104-residue stretch at 244-347 folds into the PH 2 domain; that stretch reads VIIKQGCLLK…WIRAIQMASR (104 aa).

In terms of biological role, major protein kinase C substrate of platelets. This Homo sapiens (Human) protein is Pleckstrin (PLEK).